The primary structure comprises 95 residues: Small ribosomal subunit protein bS6 (95 aa).

This sequence belongs to the bacterial ribosomal protein bS6 family.

In terms of biological role, binds together with bS18 to 16S ribosomal RNA. This Caldanaerobacter subterraneus subsp. tengcongensis (strain DSM 15242 / JCM 11007 / NBRC 100824 / MB4) (Thermoanaerobacter tengcongensis) protein is Small ribosomal subunit protein bS6.